Consider the following 480-residue polypeptide: UDP-glycosyltransferase 708D1 (480 aa).

Residue histidine 20 is the Proton acceptor of the active site. Histidine 20 lines the an anthocyanidin pocket. The Charge relay role is filled by aspartate 118. Threonine 141 contacts UDP-alpha-D-glucose. Residues 291–292 (NR) are UDP. Positions 354, 356, 371, 374, 375, 376, 379, 395, and 396 each coordinate UDP-alpha-D-glucose.

This sequence belongs to the UDP-glycosyltransferase family.

It carries out the reaction a 3'-hydro-2'-hydroxy-beta-oxodihydrochalcone + UDP-alpha-D-glucose = a 3'-(beta-D-glucopyranosyl)-2'-hydroxy-beta-oxodihydrochalcone + UDP + H(+). In terms of biological role, UDP-glucose-dependent glucosyltransferase catalyzing the c-glucosylation of the A ring of 2-hydroxynaringenin. Also active toward phloretin, but not toward naringenin and apigenin. The chain is UDP-glycosyltransferase 708D1 from Glycine max (Soybean).